A 291-amino-acid polypeptide reads, in one-letter code: DNA N6-methyl adenine demethylase (291 aa).

The region spanning 85-256 is the Fe2OG dioxygenase domain; it reads GLTLIHNFLS…RGRRIALTMR (172 aa). 171–173 lines the 2-oxoglutarate pocket; it reads LEY. Residues His184, Asp186, and His239 each coordinate Fe cation.

This sequence belongs to the alkB family. In terms of assembly, interacts with top-2; the interaction is required for localization of top-2 to DNA. Also interacts with mtss-1, his-24, ule-3, C18B2.3, pgl-1, ceh-93, mcm-4 and F37C4.5. Fe(2+) is required as a cofactor.

The protein localises to the nucleus. The catalysed reaction is an N(6)-methyl-2'-deoxyadenosine in DNA + 2-oxoglutarate + O2 = a 2'-deoxyadenosine in DNA + formaldehyde + succinate + CO2. Functionally, dioxygenase that specifically demethylates DNA methylated on the 6th position of adenine (N(6)-methyladenosine) DNA. N(6)-methyladenosine (m6A) DNA is involved in epigenetic transgenerational inheritance. Plays an essential role in DNA replication and repair in the germline during meiosis. Binds to components of the DNA replication machinery such as top-2, and directs their localization to DNA to control DNA replication. This is DNA N6-methyl adenine demethylase from Caenorhabditis elegans.